Consider the following 307-residue polypeptide: Dihydroorotate dehydrogenase B (NAD(+)), catalytic subunit (307 aa).

Residues S22 and 46–47 (KG) each bind FMN. Substrate-binding positions include K46 and 70 to 74 (NAVGL). N100 and N128 together coordinate FMN. N128 is a substrate binding site. C131 serves as the catalytic Nucleophile. FMN is bound by residues K166 and V192. Residue 193-194 (NT) participates in substrate binding. Residues G218 and 244–245 (GG) each bind FMN.

It belongs to the dihydroorotate dehydrogenase family. Type 1 subfamily. In terms of assembly, heterotetramer of 2 PyrK and 2 PyrD type B subunits. The cofactor is FMN.

It is found in the cytoplasm. The catalysed reaction is (S)-dihydroorotate + NAD(+) = orotate + NADH + H(+). Its pathway is pyrimidine metabolism; UMP biosynthesis via de novo pathway; orotate from (S)-dihydroorotate (NAD(+) route): step 1/1. In terms of biological role, catalyzes the conversion of dihydroorotate to orotate with NAD(+) as electron acceptor. This is Dihydroorotate dehydrogenase B (NAD(+)), catalytic subunit (pyrD) from Porphyromonas gingivalis (strain ATCC BAA-308 / W83).